Here is a 194-residue protein sequence, read N- to C-terminus: Holliday junction branch migration complex subunit RuvA (194 aa).

The domain I stretch occupies residues Met-1 to Leu-63. The domain II stretch occupies residues Asp-64–Val-142. The interval Ser-143–Leu-147 is flexible linker. Positions Leu-147–Asp-194 are domain III.

Belongs to the RuvA family. In terms of assembly, homotetramer. Forms an RuvA(8)-RuvB(12)-Holliday junction (HJ) complex. HJ DNA is sandwiched between 2 RuvA tetramers; dsDNA enters through RuvA and exits via RuvB. An RuvB hexamer assembles on each DNA strand where it exits the tetramer. Each RuvB hexamer is contacted by two RuvA subunits (via domain III) on 2 adjacent RuvB subunits; this complex drives branch migration. In the full resolvosome a probable DNA-RuvA(4)-RuvB(12)-RuvC(2) complex forms which resolves the HJ.

It localises to the cytoplasm. Functionally, the RuvA-RuvB-RuvC complex processes Holliday junction (HJ) DNA during genetic recombination and DNA repair, while the RuvA-RuvB complex plays an important role in the rescue of blocked DNA replication forks via replication fork reversal (RFR). RuvA specifically binds to HJ cruciform DNA, conferring on it an open structure. The RuvB hexamer acts as an ATP-dependent pump, pulling dsDNA into and through the RuvAB complex. HJ branch migration allows RuvC to scan DNA until it finds its consensus sequence, where it cleaves and resolves the cruciform DNA. This is Holliday junction branch migration complex subunit RuvA from Fusobacterium nucleatum subsp. nucleatum (strain ATCC 25586 / DSM 15643 / BCRC 10681 / CIP 101130 / JCM 8532 / KCTC 2640 / LMG 13131 / VPI 4355).